Here is a 548-residue protein sequence, read N- to C-terminus: Chaperonin GroEL (548 aa).

Residues 29–32 (TLGP), Lys-50, 86–90 (DGTTT), Gly-416, and Asp-497 contribute to the ATP site.

Belongs to the chaperonin (HSP60) family. In terms of assembly, forms a cylinder of 14 subunits composed of two heptameric rings stacked back-to-back. Interacts with the co-chaperonin GroES.

It localises to the cytoplasm. It catalyses the reaction ATP + H2O + a folded polypeptide = ADP + phosphate + an unfolded polypeptide.. In terms of biological role, together with its co-chaperonin GroES, plays an essential role in assisting protein folding. The GroEL-GroES system forms a nano-cage that allows encapsulation of the non-native substrate proteins and provides a physical environment optimized to promote and accelerate protein folding. The sequence is that of Chaperonin GroEL from Neorickettsia risticii (Ehrlichia risticii).